A 580-amino-acid polypeptide reads, in one-letter code: (3S,6E)-nerolidol synthase 1, chloroplastic (580 aa).

Residues 1-31 (MASSSWAFFKVFNPQIAPKSISHIGQSDLMQ) constitute a chloroplast transit peptide. Positions 334, 338, 478, 482, and 486 each coordinate Mg(2+). Positions 334 to 338 (DDIFD) match the DDXXD motif motif.

Belongs to the terpene synthase family. Tpsg subfamily. It depends on Mg(2+) as a cofactor. Mn(2+) is required as a cofactor.

It is found in the plastid. It localises to the chloroplast. The catalysed reaction is (2E,6E)-farnesyl diphosphate + H2O = (3S,6E)-nerolidol + diphosphate. It functions in the pathway secondary metabolite biosynthesis; terpenoid biosynthesis. Involved in monoterpene (C10) and sesquiterpene (C15) biosynthesis. Converts geranyl diphosphate (GPP) into S-linalool and farnesyl diphosphate (FPP) into (3S)-E-nerolidol. Probably not expressed in wild strawberry species. In Fragaria vesca (Woodland strawberry), this protein is (3S,6E)-nerolidol synthase 1, chloroplastic.